A 450-amino-acid chain; its full sequence is 3-phosphoshikimate 1-carboxyvinyltransferase (450 aa).

3-phosphoshikimate is bound by residues Lys-28, Ser-29, and Arg-33. Lys-28 lines the phosphoenolpyruvate pocket. Residues Gly-100 and Arg-128 each coordinate phosphoenolpyruvate. 3-phosphoshikimate-binding residues include Ser-173, Gln-175, Asp-326, and Lys-353. Residue Gln-175 participates in phosphoenolpyruvate binding. The active-site Proton acceptor is Asp-326. Residues Arg-357 and Arg-402 each coordinate phosphoenolpyruvate.

This sequence belongs to the EPSP synthase family. In terms of assembly, monomer.

The protein localises to the cytoplasm. The catalysed reaction is 3-phosphoshikimate + phosphoenolpyruvate = 5-O-(1-carboxyvinyl)-3-phosphoshikimate + phosphate. The protein operates within metabolic intermediate biosynthesis; chorismate biosynthesis; chorismate from D-erythrose 4-phosphate and phosphoenolpyruvate: step 6/7. Functionally, catalyzes the transfer of the enolpyruvyl moiety of phosphoenolpyruvate (PEP) to the 5-hydroxyl of shikimate-3-phosphate (S3P) to produce enolpyruvyl shikimate-3-phosphate and inorganic phosphate. The protein is 3-phosphoshikimate 1-carboxyvinyltransferase of Brucella canis (strain ATCC 23365 / NCTC 10854 / RM-666).